The sequence spans 495 residues: Bifunctional protein GlmU (495 aa).

The pyrophosphorylase stretch occupies residues 1–241 (MPQQTAVVVL…AAKVTGVNDR (241 aa)). Residues 10 to 13 (LAAG), K24, Q81, and 86 to 87 (GT) contribute to the UDP-N-acetyl-alpha-D-glucosamine site. D112 contributes to the Mg(2+) binding site. Positions 151, 166, 181, and 239 each coordinate UDP-N-acetyl-alpha-D-glucosamine. N239 serves as a coordination point for Mg(2+). The interval 242–262 (VQLSIATRTMNRYILERHMRA) is linker. Residues 263–495 (GVTIIDPAST…QATEQKDGEQ (233 aa)) are N-acetyltransferase. UDP-N-acetyl-alpha-D-glucosamine-binding residues include R344 and K362. H374 (proton acceptor) is an active-site residue. 2 residues coordinate UDP-N-acetyl-alpha-D-glucosamine: Y377 and N388. Residues A391, 397–398 (NY), S416, and A434 contribute to the acetyl-CoA site. Residues 467 to 495 (GTAAATAAAQALAADEKSSQATEQKDGEQ) are disordered. Over residues 468-479 (TAAATAAAQALA) the composition is skewed to low complexity. The span at 480 to 495 (ADEKSSQATEQKDGEQ) shows a compositional bias: basic and acidic residues.

The protein in the N-terminal section; belongs to the N-acetylglucosamine-1-phosphate uridyltransferase family. In the C-terminal section; belongs to the transferase hexapeptide repeat family. Homotrimer. The cofactor is Mg(2+).

The protein resides in the cytoplasm. It carries out the reaction alpha-D-glucosamine 1-phosphate + acetyl-CoA = N-acetyl-alpha-D-glucosamine 1-phosphate + CoA + H(+). It catalyses the reaction N-acetyl-alpha-D-glucosamine 1-phosphate + UTP + H(+) = UDP-N-acetyl-alpha-D-glucosamine + diphosphate. The protein operates within nucleotide-sugar biosynthesis; UDP-N-acetyl-alpha-D-glucosamine biosynthesis; N-acetyl-alpha-D-glucosamine 1-phosphate from alpha-D-glucosamine 6-phosphate (route II): step 2/2. Its pathway is nucleotide-sugar biosynthesis; UDP-N-acetyl-alpha-D-glucosamine biosynthesis; UDP-N-acetyl-alpha-D-glucosamine from N-acetyl-alpha-D-glucosamine 1-phosphate: step 1/1. It participates in bacterial outer membrane biogenesis; LPS lipid A biosynthesis. Catalyzes the last two sequential reactions in the de novo biosynthetic pathway for UDP-N-acetylglucosamine (UDP-GlcNAc). The C-terminal domain catalyzes the transfer of acetyl group from acetyl coenzyme A to glucosamine-1-phosphate (GlcN-1-P) to produce N-acetylglucosamine-1-phosphate (GlcNAc-1-P), which is converted into UDP-GlcNAc by the transfer of uridine 5-monophosphate (from uridine 5-triphosphate), a reaction catalyzed by the N-terminal domain. The protein is Bifunctional protein GlmU of Nocardia farcinica (strain IFM 10152).